We begin with the raw amino-acid sequence, 359 residues long: 3-dehydroquinate synthase (359 aa).

Residues 71–76 (DGEAYK), 105–109 (GVVGD), 129–130 (TT), K142, and K151 contribute to the NAD(+) site. Residues E184, H247, and H264 each contribute to the Zn(2+) site.

This sequence belongs to the sugar phosphate cyclases superfamily. Dehydroquinate synthase family. The cofactor is Co(2+). Zn(2+) is required as a cofactor. NAD(+) serves as cofactor.

It localises to the cytoplasm. It catalyses the reaction 7-phospho-2-dehydro-3-deoxy-D-arabino-heptonate = 3-dehydroquinate + phosphate. The protein operates within metabolic intermediate biosynthesis; chorismate biosynthesis; chorismate from D-erythrose 4-phosphate and phosphoenolpyruvate: step 2/7. Functionally, catalyzes the conversion of 3-deoxy-D-arabino-heptulosonate 7-phosphate (DAHP) to dehydroquinate (DHQ). The sequence is that of 3-dehydroquinate synthase from Burkholderia lata (strain ATCC 17760 / DSM 23089 / LMG 22485 / NCIMB 9086 / R18194 / 383).